Consider the following 50-residue polypeptide: Sperm protamine P1 (50 aa).

Disulfide bonds link C7-C15 and C39-C47.

This sequence belongs to the protamine P1 family. Cross-linked by interchain disulfide bonds around the DNA-helix. As to expression, testis.

The protein resides in the nucleus. Its subcellular location is the chromosome. In terms of biological role, protamines substitute for histones in the chromatin of sperm during the haploid phase of spermatogenesis. They compact sperm DNA into a highly condensed, stable and inactive complex. The chain is Sperm protamine P1 (PRM1) from Sus scrofa (Pig).